The sequence spans 359 residues: Glycerol-3-phosphate dehydrogenase [NAD(P)+] (359 aa).

NADPH contacts are provided by Thr11, Trp12, Arg32, and Lys107. The sn-glycerol 3-phosphate site is built by Lys107 and Gly138. Ala142 contributes to the NADPH binding site. Sn-glycerol 3-phosphate is bound by residues Lys193, Asp246, Ser256, Arg257, and Asn258. Lys193 serves as the catalytic Proton acceptor. Arg257 is an NADPH binding site. NADPH contacts are provided by Val281 and Glu283.

Belongs to the NAD-dependent glycerol-3-phosphate dehydrogenase family.

The protein localises to the cytoplasm. It catalyses the reaction sn-glycerol 3-phosphate + NAD(+) = dihydroxyacetone phosphate + NADH + H(+). It carries out the reaction sn-glycerol 3-phosphate + NADP(+) = dihydroxyacetone phosphate + NADPH + H(+). It functions in the pathway membrane lipid metabolism; glycerophospholipid metabolism. In terms of biological role, catalyzes the reduction of the glycolytic intermediate dihydroxyacetone phosphate (DHAP) to sn-glycerol 3-phosphate (G3P), the key precursor for phospholipid synthesis. In Dehalococcoides mccartyi (strain CBDB1), this protein is Glycerol-3-phosphate dehydrogenase [NAD(P)+].